Here is a 226-residue protein sequence, read N- to C-terminus: Cytidylate kinase (226 aa).

Residue 10–18 (GPASSGKST) participates in ATP binding.

The protein belongs to the cytidylate kinase family. Type 1 subfamily.

It localises to the cytoplasm. The catalysed reaction is CMP + ATP = CDP + ADP. It carries out the reaction dCMP + ATP = dCDP + ADP. The sequence is that of Cytidylate kinase from Streptococcus pyogenes serotype M4 (strain MGAS10750).